The sequence spans 3364 residues: Salivary gland surface protein 1 (3364 aa).

Beta-propeller regions lie at residues 1 to 344 (MLRI…VVDA) and 705 to 1216 (FEQE…LKAL). Asn-59 carries N-linked (GlcNAc...) asparagine glycosylation. 2 cysteine pairs are disulfide-bonded: Cys-251–Cys-297 and Cys-1128–Cys-1139. The segment at 345-2733 (VEPKLDQGSP…PVSQIDPDGQ (2389 aa)) is rhs/YD-repeats. An N-linked (GlcNAc...) asparagine glycan is attached at Asn-1149. Residues 1345-1494 (NQELVQFLGF…VHVDHVRLSP (150 aa)) are carbohydrate-binding module (CBM). Residues 1575–1715 (HSWVESFSPY…VGIKDVIVME (141 aa)) are lectin carbohydrate-recognition domain (lectin-CRD). The tract at residues 2225 to 2304 (HDKCDQNLIP…SEKMLEQGYP (80 aa)) is wedge domain. Cystine bridges form between Cys-2253–Cys-2285 and Cys-2407–Cys-2421. 5 helical membrane passes run 2734-2754 (IAVT…LGAA), 2774-2794 (IGLF…AATF), 2805-2825 (MIAG…LGAA), 2844-2864 (WNGL…FVGI), and 2878-2898 (MIYA…GGGM). The interval 3126–3216 (YSPDSDGNQI…ARIAPAALRN (91 aa)) is tox-SGS.

Probably cleaved at the C-terminus. As to expression, female saliva (at protein level). Female salivary gland (at protein level). Not detected in female carcass without salivary glands. Not detected in male tissues.

It localises to the cell membrane. Its subcellular location is the secreted. Functionally, (Microbial infection) Facilitates, but is not essential for, invasion of salivary glands by Plasmodium gallinaceum. Plays a role in Plasmodium gallinaceum oocyst development in mosquito midgut. (Microbial infection) Probably facilitates Zika virus replication in salivary glands. The polypeptide is Salivary gland surface protein 1 (Aedes aegypti (Yellowfever mosquito)).